The chain runs to 431 residues: Phosphoribosylamine--glycine ligase (431 aa).

Positions 109–316 constitute an ATP-grasp domain; it reads KDFLARHGIP…LVDLVEAAID (208 aa). 135-196 serves as a coordination point for ATP; that stretch reads VREKGAPIVV…EEFLDGEEAS (62 aa). Positions 286 and 288 each coordinate Mg(2+).

It belongs to the GARS family. The cofactor is Mg(2+). It depends on Mn(2+) as a cofactor.

The catalysed reaction is 5-phospho-beta-D-ribosylamine + glycine + ATP = N(1)-(5-phospho-beta-D-ribosyl)glycinamide + ADP + phosphate + H(+). Its pathway is purine metabolism; IMP biosynthesis via de novo pathway; N(1)-(5-phospho-D-ribosyl)glycinamide from 5-phospho-alpha-D-ribose 1-diphosphate: step 2/2. The sequence is that of Phosphoribosylamine--glycine ligase from Xanthomonas campestris pv. campestris (strain ATCC 33913 / DSM 3586 / NCPPB 528 / LMG 568 / P 25).